The sequence spans 302 residues: Homoserine O-acetyltransferase (302 aa).

C142 acts as the Acyl-thioester intermediate in catalysis. Substrate is bound by residues K163 and S192. The Proton acceptor role is filled by H235. E237 is a catalytic residue. R249 provides a ligand contact to substrate.

Belongs to the MetA family.

The protein localises to the cytoplasm. The catalysed reaction is L-homoserine + acetyl-CoA = O-acetyl-L-homoserine + CoA. The protein operates within amino-acid biosynthesis; L-methionine biosynthesis via de novo pathway; O-acetyl-L-homoserine from L-homoserine: step 1/1. Functionally, transfers an acetyl group from acetyl-CoA to L-homoserine, forming acetyl-L-homoserine. The polypeptide is Homoserine O-acetyltransferase (Clostridium novyi (strain NT)).